The sequence spans 147 residues: Large ribosomal subunit protein uL11 (147 aa).

Belongs to the universal ribosomal protein uL11 family. Part of the ribosomal stalk of the 50S ribosomal subunit. Interacts with L10 and the large rRNA to form the base of the stalk. L10 forms an elongated spine to which L12 dimers bind in a sequential fashion forming a multimeric L10(L12)X complex. In terms of processing, one or more lysine residues are methylated.

Its function is as follows. Forms part of the ribosomal stalk which helps the ribosome interact with GTP-bound translation factors. The protein is Large ribosomal subunit protein uL11 of Cytophaga hutchinsonii (strain ATCC 33406 / DSM 1761 / CIP 103989 / NBRC 15051 / NCIMB 9469 / D465).